Consider the following 488-residue polypeptide: uncharacterized protein (488 aa).

It belongs to the IIV-6 467R family.

This is an uncharacterized protein from Invertebrate iridescent virus 3 (IIV-3).